A 99-amino-acid chain; its full sequence is Large ribosomal subunit protein uL23 (99 aa).

Belongs to the universal ribosomal protein uL23 family. As to quaternary structure, part of the 50S ribosomal subunit. Contacts protein L29, and trigger factor when it is bound to the ribosome.

Functionally, one of the early assembly proteins it binds 23S rRNA. One of the proteins that surrounds the polypeptide exit tunnel on the outside of the ribosome. Forms the main docking site for trigger factor binding to the ribosome. The sequence is that of Large ribosomal subunit protein uL23 from Pseudomonas savastanoi pv. phaseolicola (strain 1448A / Race 6) (Pseudomonas syringae pv. phaseolicola (strain 1448A / Race 6)).